The chain runs to 468 residues: ATP synthase subunit beta (468 aa).

Residue 155 to 162 (GGAGVGKT) coordinates ATP.

It belongs to the ATPase alpha/beta chains family. F-type ATPases have 2 components, CF(1) - the catalytic core - and CF(0) - the membrane proton channel. CF(1) has five subunits: alpha(3), beta(3), gamma(1), delta(1), epsilon(1). CF(0) has three main subunits: a(1), b(2) and c(9-12). The alpha and beta chains form an alternating ring which encloses part of the gamma chain. CF(1) is attached to CF(0) by a central stalk formed by the gamma and epsilon chains, while a peripheral stalk is formed by the delta and b chains.

The protein resides in the cell inner membrane. The catalysed reaction is ATP + H2O + 4 H(+)(in) = ADP + phosphate + 5 H(+)(out). In terms of biological role, produces ATP from ADP in the presence of a proton gradient across the membrane. The catalytic sites are hosted primarily by the beta subunits. In Thermotoga petrophila (strain ATCC BAA-488 / DSM 13995 / JCM 10881 / RKU-1), this protein is ATP synthase subunit beta.